The primary structure comprises 405 residues: Tryptophan synthase beta chain (405 aa).

At Lys98 the chain carries N6-(pyridoxal phosphate)lysine.

The protein belongs to the TrpB family. In terms of assembly, tetramer of two alpha and two beta chains. The cofactor is pyridoxal 5'-phosphate.

The enzyme catalyses (1S,2R)-1-C-(indol-3-yl)glycerol 3-phosphate + L-serine = D-glyceraldehyde 3-phosphate + L-tryptophan + H2O. It participates in amino-acid biosynthesis; L-tryptophan biosynthesis; L-tryptophan from chorismate: step 5/5. Its function is as follows. The beta subunit is responsible for the synthesis of L-tryptophan from indole and L-serine. The protein is Tryptophan synthase beta chain of Stenotrophomonas maltophilia (strain R551-3).